Here is a 429-residue protein sequence, read N- to C-terminus: MIDPNLLRNNLAEVAEKLKVKRNFMLDTEKLTALEDQRKNLQVTTENLQAERNARSKAIGAAKARGEDIAPLLAEMDDMGNQLTEAKAQLDAVLAEINQIALSIPNLPADEVPLGKDDTENKEILRWGTPRTFDFEVKDHITLGEEANGLDFAAGAKLAGARFAVMKGQIAKMHRALAQFMLDLHTEQHGYLETYVPYLVNHATLYGTGQLPKFGEDLFHTLALQGEQPYALIPTAEVPVTNLVRDVIIDEAKLPIKMTAHTPCFRSEAGSYGRDTRGLIRMHQFDKVEMVQIVDPDKSMEALEELTGHAEKVLQLLNLPYRKVLLCTGDMGFGSCKTYDLEVWVPAQNTYREISSCSNMWDFQARRMQARCKAKGDKKTRLVHTLNGSGLAVGRTLVAVLENYQNADGSITVPEVLRPYMGGLDVIGK.

235–237 (TAE) contacts L-serine. Position 266–268 (266–268 (RSE)) interacts with ATP. Position 289 (E289) interacts with L-serine. 353–356 (EISS) lines the ATP pocket. S389 provides a ligand contact to L-serine.

The protein belongs to the class-II aminoacyl-tRNA synthetase family. Type-1 seryl-tRNA synthetase subfamily. Homodimer. The tRNA molecule binds across the dimer.

It localises to the cytoplasm. It catalyses the reaction tRNA(Ser) + L-serine + ATP = L-seryl-tRNA(Ser) + AMP + diphosphate + H(+). The catalysed reaction is tRNA(Sec) + L-serine + ATP = L-seryl-tRNA(Sec) + AMP + diphosphate + H(+). The protein operates within aminoacyl-tRNA biosynthesis; selenocysteinyl-tRNA(Sec) biosynthesis; L-seryl-tRNA(Sec) from L-serine and tRNA(Sec): step 1/1. In terms of biological role, catalyzes the attachment of serine to tRNA(Ser). Is also able to aminoacylate tRNA(Sec) with serine, to form the misacylated tRNA L-seryl-tRNA(Sec), which will be further converted into selenocysteinyl-tRNA(Sec). The polypeptide is Serine--tRNA ligase (Haemophilus influenzae (strain PittEE)).